We begin with the raw amino-acid sequence, 484 residues long: Glycogen synthase (484 aa).

K15 provides a ligand contact to ADP-alpha-D-glucose.

The protein belongs to the glycosyltransferase 1 family. Bacterial/plant glycogen synthase subfamily.

It catalyses the reaction [(1-&gt;4)-alpha-D-glucosyl](n) + ADP-alpha-D-glucose = [(1-&gt;4)-alpha-D-glucosyl](n+1) + ADP + H(+). It functions in the pathway glycan biosynthesis; glycogen biosynthesis. In terms of biological role, synthesizes alpha-1,4-glucan chains using ADP-glucose. This Bacillus subtilis (strain 168) protein is Glycogen synthase (glgA).